A 77-amino-acid polypeptide reads, in one-letter code: Large ribosomal subunit protein eL14 (77 aa).

This sequence belongs to the eukaryotic ribosomal protein eL14 family.

The chain is Large ribosomal subunit protein eL14 from Methanococcus maripaludis (strain C7 / ATCC BAA-1331).